The primary structure comprises 113 residues: Large ribosomal subunit protein bL17 (113 aa).

The protein belongs to the bacterial ribosomal protein bL17 family. As to quaternary structure, part of the 50S ribosomal subunit. Contacts protein L32.

This Clostridium botulinum (strain Alaska E43 / Type E3) protein is Large ribosomal subunit protein bL17.